We begin with the raw amino-acid sequence, 135 residues long: Large ribosomal subunit protein uL16c (135 aa).

This sequence belongs to the universal ribosomal protein uL16 family. As to quaternary structure, part of the 50S ribosomal subunit.

Its subcellular location is the plastid. It localises to the chloroplast. The polypeptide is Large ribosomal subunit protein uL16c (Eucalyptus globulus subsp. globulus (Tasmanian blue gum)).